The sequence spans 306 residues: Glutathione transport system permease protein GsiC (306 aa).

The Cytoplasmic portion of the chain corresponds to 1-8 (MLNYVLKR). The chain crosses the membrane as a helical span at residues 9–29 (LLGLIPTLLIVAVLVFLFVHL). Residues 30–102 (LPGDPARLIA…SRFLPTLWLT (73 aa)) lie on the Periplasmic side of the membrane. The ABC transmembrane type-1 domain occupies 95–292 (FLPTLWLTIT…LEFILINLVV (198 aa)). Residues 103–123 (ITSMIWAVLFGMAIGIAAAVW) form a helical membrane-spanning segment. Residues 124 to 134 (RNRWPDRVGMT) are Cytoplasmic-facing. Residues 135 to 155 (LAVTGISFPAFALGMLLMQIF) traverse the membrane as a helical segment. The Periplasmic segment spans residues 156–168 (SVDLGWLPTVGAD). A helical transmembrane segment spans residues 169 to 189 (SWQHYILPSLTLGAAVASVMA). At 190–228 (RFTRSSFVDVLSEDYMRTARAKGVSETWVVLKHGLRNAM) the chain is on the cytoplasmic side. Residues 229 to 249 (IPVVTMMGLQFGFLLGGSIVV) traverse the membrane as a helical segment. Topologically, residues 250 to 278 (EKVFNWPGLGRLLVDSVDMRDYPVIQAEV) are periplasmic. Residues 279 to 299 (LLFSLEFILINLVVDVLYAAI) traverse the membrane as a helical segment. The Cytoplasmic segment spans residues 300–306 (NPAIRYK).

The protein belongs to the binding-protein-dependent transport system permease family. In terms of assembly, the complex is composed of two ATP-binding proteins (GsiA), two transmembrane proteins (GsiC and GsiD) and a solute-binding protein (GsiB).

Its subcellular location is the cell inner membrane. In terms of biological role, part of the ABC transporter complex GsiABCD involved in glutathione import. Probably responsible for the translocation of the substrate across the membrane. This chain is Glutathione transport system permease protein GsiC, found in Salmonella choleraesuis (strain SC-B67).